Reading from the N-terminus, the 1290-residue chain is DNA-directed RNA polymerase subunit beta' (1290 aa).

4 residues coordinate Zn(2+): Cys-68, Cys-70, Cys-83, and Cys-86. Asp-530, Asp-532, and Asp-534 together coordinate Mg(2+). The Zn(2+) site is built by Cys-909, Cys-985, Cys-992, and Cys-995.

It belongs to the RNA polymerase beta' chain family. In terms of assembly, the RNAP catalytic core consists of 2 alpha, 1 beta, 1 beta' and 1 omega subunit. When a sigma factor is associated with the core the holoenzyme is formed, which can initiate transcription. The cofactor is Mg(2+). Zn(2+) is required as a cofactor.

It catalyses the reaction RNA(n) + a ribonucleoside 5'-triphosphate = RNA(n+1) + diphosphate. Functionally, DNA-dependent RNA polymerase catalyzes the transcription of DNA into RNA using the four ribonucleoside triphosphates as substrates. The protein is DNA-directed RNA polymerase subunit beta' of Mycoplasma pneumoniae (strain ATCC 29342 / M129 / Subtype 1) (Mycoplasmoides pneumoniae).